The following is a 487-amino-acid chain: GPI mannosyltransferase 1 (487 aa).

3 helical membrane passes run 26 to 46 (PLPL…YGLW), 87 to 107 (ILAW…GPWA), and 121 to 141 (VLFA…LVMG). Positions 147 to 175 (SAAKGKEKDTEKTKEGGKKGPSVTASTGM) are disordered. Residues 150-164 (KGKEKDTEKTKEGGK) are compositionally biased toward basic and acidic residues. Transmembrane regions (helical) follow at residues 205–225 (LLGV…ITLA), 227–247 (LLLG…PAIV), 289–309 (LLLA…MYRL), 359–379 (IESL…PLTL), 393–413 (FAFV…YLVL), 429–449 (MGLV…QQAY), and 462–482 (GLWM…GVIV).

The protein belongs to the PIGM family.

It localises to the endoplasmic reticulum membrane. It functions in the pathway glycolipid biosynthesis; glycosylphosphatidylinositol-anchor biosynthesis. Functionally, mannosyltransferase involved in glycosylphosphatidylinositol-anchor biosynthesis. Transfers the first alpha-1,4-mannose to GlcN-acyl-PI during GPI precursor assembly. Required for cell wall integrity. This chain is GPI mannosyltransferase 1 (gim-1), found in Neurospora crassa (strain ATCC 24698 / 74-OR23-1A / CBS 708.71 / DSM 1257 / FGSC 987).